A 127-amino-acid polypeptide reads, in one-letter code: Major sperm protein 78 (127 aa).

Ala2 carries the N-acetylalanine modification. Residues 9–126 (DIQTQPGTKI…RRKNLPIEYN (118 aa)) form the MSP domain.

In terms of tissue distribution, sperm.

It is found in the cell projection. Its subcellular location is the pseudopodium. The protein resides in the cytoplasm. It localises to the cytoskeleton. Its function is as follows. Central component in molecular interactions underlying sperm crawling. Forms an extensive filament system that extends from sperm villipoda, along the leading edge of the pseudopod. In Caenorhabditis elegans, this protein is Major sperm protein 78 (msp-78).